The sequence spans 221 residues: Large ribosomal subunit protein uL16y (221 aa).

Belongs to the universal ribosomal protein uL16 family. Component of the small ribosomal subunit. Mature ribosomes consist of a small (40S) and a large (60S) subunit. The 40S subunit contains about 33 different proteins and 1 molecule of RNA (18S). The 60S subunit contains about 49 different proteins and 3 molecules of RNA (25S, 5.8S and 5S).

The sequence is that of Large ribosomal subunit protein uL16y (RPL10B) from Arabidopsis thaliana (Mouse-ear cress).